The chain runs to 407 residues: Probable sodium/metabolite cotransporter BASS5, chloroplastic (407 aa).

The N-terminal 57 residues, 1-57 (MGVISPTETLFLKSQHRLLQPRNYSYALAFHSTRRVANFPRNSFSSLGSCSVDFPLR), are a transit peptide targeting the chloroplast. Helical transmembrane passes span 101–121 (FIPH…PSFT), 122–142 (WFKP…VGIN), 162–184 (YIGQ…VSLF), 191–213 (GAGI…TFLT), 222–242 (IVMT…LSLL), 252–272 (VFGM…AGLL), 286–306 (PFLP…PLAL), 317–337 (ATIL…GYFF), and 379–399 (LVGV…VSLV).

It belongs to the bile acid:sodium symporter (BASS) (TC 2.A.28) family. As to expression, widely expressed.

The protein localises to the membrane. The protein resides in the plastid. It is found in the chloroplast envelope. Its function is as follows. Plastidic transporter involved in the biosynthesis of aliphatic glucosinolates by translocating the biosynthetic intermediates of Met-derived glucosinolates across chloroplast membranes. Transports short chain (C2) alpha-keto acids, such as 4-methylsulfanyl-2-oxobutanoic acid, from the cytosol to the chloroplast where they are subjected to chain elongation cycles. Also functions in the transport of chain-elongated (C3 to C8) Met derivatives from the chloroplast to the cytosol. Does not seem to be involved in the transport of indole-derived glucosinolates. This is Probable sodium/metabolite cotransporter BASS5, chloroplastic (BASS5) from Arabidopsis thaliana (Mouse-ear cress).